We begin with the raw amino-acid sequence, 313 residues long: Putative S-adenosyl-L-methionine-dependent methyltransferase MAV_5150 (313 aa).

Residues Asp139 and 168–169 contribute to the S-adenosyl-L-methionine site; that span reads DL.

This sequence belongs to the UPF0677 family.

In terms of biological role, exhibits S-adenosyl-L-methionine-dependent methyltransferase activity. In Mycobacterium avium (strain 104), this protein is Putative S-adenosyl-L-methionine-dependent methyltransferase MAV_5150.